We begin with the raw amino-acid sequence, 401 residues long: Large ribosomal subunit protein uL4B (401 aa).

The span at I351–T373 shows a compositional bias: basic and acidic residues. The segment at I351–K401 is disordered. Residues K374–Q385 show a composition bias toward basic residues. Residues A386 to K401 are compositionally biased toward basic and acidic residues.

This sequence belongs to the universal ribosomal protein uL4 family. In terms of assembly, component of the large ribosomal subunit.

The protein localises to the cytoplasm. In terms of biological role, component of the large ribosomal subunit. The ribosome is a large ribonucleoprotein complex responsible for the synthesis of proteins in the cell. This Xenopus laevis (African clawed frog) protein is Large ribosomal subunit protein uL4B (rpl4-b).